Consider the following 652-residue polypeptide: Pesticidal crystal protein Cry3Bb (652 aa).

Residues 1 to 12 (MNPNNRSEHDTI) are compositionally biased toward basic and acidic residues. Disordered regions lie at residues 1–33 (MNPN…ADNP) and 433–465 (KNET…ETTD). Residues 14–33 (VTPNSELQTNHNQYPLADNP) show a composition bias toward polar residues.

The protein belongs to the delta endotoxin family. In terms of assembly, monomer.

Functionally, promotes colloidosmotic lysis by binding to the midgut epithelial cells of Coleoptera. Has moderate level of toxicity to southern corn rootworm. The sequence is that of Pesticidal crystal protein Cry3Bb (cry3Bb) from Bacillus thuringiensis.